A 101-amino-acid polypeptide reads, in one-letter code: Small ribosomal subunit protein uS14 (101 aa).

This sequence belongs to the universal ribosomal protein uS14 family. As to quaternary structure, part of the 30S ribosomal subunit. Contacts proteins S3 and S10.

In terms of biological role, binds 16S rRNA, required for the assembly of 30S particles and may also be responsible for determining the conformation of the 16S rRNA at the A site. This Aeromonas hydrophila subsp. hydrophila (strain ATCC 7966 / DSM 30187 / BCRC 13018 / CCUG 14551 / JCM 1027 / KCTC 2358 / NCIMB 9240 / NCTC 8049) protein is Small ribosomal subunit protein uS14.